Here is a 128-residue protein sequence, read N- to C-terminus: uncharacterized protein (128 aa).

This is an uncharacterized protein from Vaccinia virus (strain Copenhagen) (VACV).